A 340-amino-acid polypeptide reads, in one-letter code: Phosphate carrier protein, mitochondrial (340 aa).

A mitochondrion-targeting transit peptide spans 1–27 (MSVFSQLAESSKQNPFSLPVRSGNCAS). 3 Solcar repeats span residues 41–125 (KYYA…FKNV), 138–222 (YRTS…TVEA), and 239–317 (EQLV…VKVA). Transmembrane regions (helical) follow at residues 47 to 67 (ALGG…LDLV), 95 to 114 (RALV…QGLG), 141 to 161 (SLYL…LAPM), 200 to 220 (PLWM…EKTV), 241 to 261 (LVVT…VSHP), and 297 to 317 (IIMI…VKVA).

Belongs to the mitochondrial carrier (TC 2.A.29) family.

Its subcellular location is the mitochondrion inner membrane. Its function is as follows. Transport of phosphate groups from the cytosol to the mitochondrial matrix. The chain is Phosphate carrier protein, mitochondrial from Caenorhabditis elegans.